The following is a 339-amino-acid chain: N-acetyl-gamma-glutamyl-phosphate reductase (339 aa).

Residue Cys145 is part of the active site.

Belongs to the NAGSA dehydrogenase family. Type 1 subfamily.

It is found in the cytoplasm. It catalyses the reaction N-acetyl-L-glutamate 5-semialdehyde + phosphate + NADP(+) = N-acetyl-L-glutamyl 5-phosphate + NADPH + H(+). Its pathway is amino-acid biosynthesis; L-arginine biosynthesis; N(2)-acetyl-L-ornithine from L-glutamate: step 3/4. Functionally, catalyzes the NADPH-dependent reduction of N-acetyl-5-glutamyl phosphate to yield N-acetyl-L-glutamate 5-semialdehyde. This is N-acetyl-gamma-glutamyl-phosphate reductase from Kosmotoga olearia (strain ATCC BAA-1733 / DSM 21960 / TBF 19.5.1).